A 422-amino-acid chain; its full sequence is ATP phosphoribosyltransferase regulatory subunit (422 aa).

The protein belongs to the class-II aminoacyl-tRNA synthetase family. HisZ subfamily. In terms of assembly, heteromultimer composed of HisG and HisZ subunits.

The protein resides in the cytoplasm. It participates in amino-acid biosynthesis; L-histidine biosynthesis; L-histidine from 5-phospho-alpha-D-ribose 1-diphosphate: step 1/9. Its function is as follows. Required for the first step of histidine biosynthesis. May allow the feedback regulation of ATP phosphoribosyltransferase activity by histidine. The chain is ATP phosphoribosyltransferase regulatory subunit from Clostridium botulinum (strain Langeland / NCTC 10281 / Type F).